The following is a 51-amino-acid chain: SPbeta prophage-derived uncharacterized protein YorQ (51 aa).

The sequence is that of SPbeta prophage-derived uncharacterized protein YorQ (yorQ) from Bacillus subtilis (strain 168).